Here is an 865-residue protein sequence, read N- to C-terminus: cGMP-specific 3',5'-cyclic phosphodiesterase (865 aa).

Over residues C69–A83 the composition is skewed to low complexity. A disordered region spans residues C69–S92. The residue at position 92 (S92) is a Phosphoserine. 2 consecutive GAF domains span residues D154–L304 and S336–I493. A PDEase domain is found at E526–Q850. H603 serves as the catalytic Proton donor. Zn(2+)-binding residues include H607, H643, D644, and D754. D644 provides a ligand contact to Mg(2+). Q807 is a binding site for 3',5'-cyclic GMP.

Belongs to the cyclic nucleotide phosphodiesterase family. Zn(2+) serves as cofactor. The cofactor is Mg(2+). In terms of processing, phosphorylation is regulated by binding of cGMP to the two allosteric sites. Phosphorylation by PRKG1 leads to its activation. As to expression, isoform PDE5A1 and isoform PDE5A2 are highly expressed in the cerebellum, hippocampus, retina, lung, heart, spleen, and thoracic artery. Isoform PDE5A1, but not isoform PDE5A2, is also abundantly expressed in the pylorus.

It localises to the cytoplasm. It is found in the cytosol. The enzyme catalyses 3',5'-cyclic GMP + H2O = GMP + H(+). The protein operates within purine metabolism; 3',5'-cyclic GMP degradation; GMP from 3',5'-cyclic GMP: step 1/1. With respect to regulation, inhibited by zaprinast. Its function is as follows. Plays a role in signal transduction by regulating the intracellular concentration of cyclic nucleotides. This phosphodiesterase catalyzes the specific hydrolysis of cGMP to 5'-GMP. Specifically regulates nitric-oxide-generated cGMP. In Canis lupus familiaris (Dog), this protein is cGMP-specific 3',5'-cyclic phosphodiesterase (PDE5A).